The primary structure comprises 718 residues: Phenylalanine--tRNA ligase beta subunit (718 aa).

The tRNA-binding domain maps to 39 to 153 (LNEISGIKFG…IFDLESNPLK (115 aa)). Positions 386–460 (SKKTFLDLNY…RFYGLEKLKD (75 aa)) constitute a B5 domain. Mg(2+) contacts are provided by aspartate 438, aspartate 444, and aspartate 448.

The protein belongs to the phenylalanyl-tRNA synthetase beta subunit family. Type 1 subfamily. As to quaternary structure, tetramer of two alpha and two beta subunits. It depends on Mg(2+) as a cofactor.

The protein resides in the cytoplasm. The enzyme catalyses tRNA(Phe) + L-phenylalanine + ATP = L-phenylalanyl-tRNA(Phe) + AMP + diphosphate + H(+). The chain is Phenylalanine--tRNA ligase beta subunit from Mesomycoplasma hyopneumoniae (strain 7448) (Mycoplasma hyopneumoniae).